The chain runs to 348 residues: EGF-like domain containing protein 1 (348 aa).

The signal sequence occupies residues 1–19 (MFYLSTFMTIVISLSLVSC). The region spanning 60–92 (TGSDCKVTCQNNGRCYDGNKCLCSSDYTGHLCE) is the EGF-like domain. Intrachain disulfides connect cysteine 64–cysteine 74, cysteine 68–cysteine 80, and cysteine 82–cysteine 91. The region spanning 99–342 (RCTLDGVVFE…PTCAAPAVSQ (244 aa)) is the ZP domain.

Prismatic layer of shell (at protein level). Expressed primarily in the mantle with highest level in the mantle edge and lower level in the mantle pallium.

It is found in the secreted. The chain is EGF-like domain containing protein 1 from Margaritifera margaritifera (Freshwater pearl mussel).